We begin with the raw amino-acid sequence, 114 residues long: Holo-[acyl-carrier-protein] synthase (114 aa).

Positions 8 and 58 each coordinate Mg(2+).

Belongs to the P-Pant transferase superfamily. AcpS family. Mg(2+) is required as a cofactor.

The protein localises to the cytoplasm. It catalyses the reaction apo-[ACP] + CoA = holo-[ACP] + adenosine 3',5'-bisphosphate + H(+). Functionally, transfers the 4'-phosphopantetheine moiety from coenzyme A to a Ser of acyl-carrier-protein. The protein is Holo-[acyl-carrier-protein] synthase of Mycoplasma genitalium (strain ATCC 33530 / DSM 19775 / NCTC 10195 / G37) (Mycoplasmoides genitalium).